Here is a 308-residue protein sequence, read N- to C-terminus: U-box domain-containing protein 54 (308 aa).

The segment at 172–235 (FSEFSTSAEK…NESDEDPRLE (64 aa)) is disordered. A compositionally biased stretch (basic and acidic residues) spans 210-227 (ESPKKGRKETIEKSKSNE). The region spanning 232–306 (PRLEDFKCPI…KDWLEKNPNY (75 aa)) is the U-box domain.

It catalyses the reaction S-ubiquitinyl-[E2 ubiquitin-conjugating enzyme]-L-cysteine + [acceptor protein]-L-lysine = [E2 ubiquitin-conjugating enzyme]-L-cysteine + N(6)-ubiquitinyl-[acceptor protein]-L-lysine.. Its pathway is protein modification; protein ubiquitination. Functionally, functions as an E3 ubiquitin ligase. This is U-box domain-containing protein 54 (PUB54) from Arabidopsis thaliana (Mouse-ear cress).